The primary structure comprises 170 residues: Inner membrane protein p22 (170 aa).

The Intravirion segment spans residues 1 to 3 (MST). Residues 4–24 (LLIALIALIVLLIIILVVFLY) form a helical membrane-spanning segment. Residues 25-170 (YKKQQPPKKV…LYLPRNHKYA (146 aa)) are Virion surface-facing.

It belongs to the asfivirus inner membrane protein p22 family.

Its subcellular location is the virion membrane. It localises to the host cell membrane. This chain is Inner membrane protein p22, found in Ornithodoros (relapsing fever ticks).